We begin with the raw amino-acid sequence, 261 residues long: uncharacterized protein (261 aa).

The signal sequence occupies residues 1-20 (MKIQVMLIIIFVGIFTICLA). N-linked (GlcNAc...) asparagine; by host glycosylation is found at Asn22 and Asn27.

The protein resides in the secreted. This is an uncharacterized protein from Acanthamoeba polyphaga (Amoeba).